Consider the following 398-residue polypeptide: Acetate kinase (398 aa).

Asparagine 7 is a binding site for Mg(2+). Lysine 14 lines the ATP pocket. Residue arginine 91 coordinates substrate. Catalysis depends on aspartate 148, which acts as the Proton donor/acceptor. ATP is bound by residues 208–212 (HIGNG), 283–285 (DLR), and 331–335 (GVGEN). Glutamate 385 lines the Mg(2+) pocket.

It belongs to the acetokinase family. Homodimer. The cofactor is Mg(2+). Mn(2+) serves as cofactor.

It is found in the cytoplasm. The catalysed reaction is acetate + ATP = acetyl phosphate + ADP. Its pathway is metabolic intermediate biosynthesis; acetyl-CoA biosynthesis; acetyl-CoA from acetate: step 1/2. Catalyzes the formation of acetyl phosphate from acetate and ATP. Can also catalyze the reverse reaction. In Porphyromonas gingivalis (strain ATCC 33277 / DSM 20709 / CIP 103683 / JCM 12257 / NCTC 11834 / 2561), this protein is Acetate kinase.